We begin with the raw amino-acid sequence, 185 residues long: Homeobox expressed in ES cells 1 (185 aa).

The segment at residues 108-167 (GRRPRTAFTQNQIEVLENVFRVNCYPGIDIREDLAQKLNLEEDRIQIWFQNRRAKLKRSH) is a DNA-binding region (homeobox).

Belongs to the ANF homeobox family. Can form heterodimers with PROP1 in binding to DNA. Interacts with TLE1.

It localises to the nucleus. Required for the normal development of the forebrain, eyes and other anterior structures such as the olfactory placodes and pituitary gland. Possible transcriptional repressor. Binds to the palindromic PIII sequence, 5'-AGCTTGAGTCTAATTGAATTAACTGTAC-3'. HESX1 and PROP1 bind as heterodimers on this palindromic site, and, in vitro, HESX1 can antagonize PROP1 activation. The sequence is that of Homeobox expressed in ES cells 1 (HESX1) from Pan paniscus (Pygmy chimpanzee).